Reading from the N-terminus, the 556-residue chain is Polypyrimidine tract-binding protein 1 (556 aa).

An N-acetylmethionine modification is found at M1. S16 is modified (phosphoserine). Positions 35 to 54 are disordered; the sequence is ASAANGNDSKKFKGDNRSTG. RRM domains are found at residues 58 to 142, 183 to 259, and 362 to 436; these read RVIH…SSPN, LRII…FSKL, and SVLL…LSKH. K64 participates in a covalent cross-link: Glycyl lysine isopeptide (Lys-Gly) (interchain with G-Cter in SUMO2). A Phosphotyrosine modification is found at Y126. T137 is subject to Phosphothreonine. S140 is subject to Phosphoserine. K217 participates in a covalent cross-link: Glycyl lysine isopeptide (Lys-Gly) (interchain with G-Cter in SUMO2). Positions 436–458 are disordered; it reads HQSVQLPREGQEDQGLTKDYGSS. S458 is modified (phosphoserine). The 76-residue stretch at 479-554 folds into the RRM 4 domain; sequence ATLHLSNIPP…HHLRVSFSKS (76 aa).

As to quaternary structure, monomer. Part of a ternary complex containing KHSRP, PTBP1, PTBP2 and HNRPH1. Interacts with RAVER1 and SFPQ.

Its subcellular location is the nucleus. In terms of biological role, plays a role in pre-mRNA splicing and in the regulation of alternative splicing events. Activates exon skipping of its own pre-mRNA during muscle cell differentiation. Binds to the polypyrimidine tract of introns. May promote RNA looping when bound to two separate polypyrimidine tracts in the same pre-mRNA. May promote the binding of U2 snRNP to pre-mRNA. Cooperates with RAVER1 to modulate switching between mutually exclusive exons during maturation of the TPM1 pre-mRNA. Represses the splicing of MAPT/Tau exon 10. Binds to polypyrimidine-rich controlling element (PCE) of CFTR and promotes exon skipping of CFTR exon 9, thereby antagonizing TIA1 and its role in exon inclusion of CFTR exon 9. Plays a role in the splicing of pyruvate kinase PKM by binding repressively to a polypyrimidine tract flanking PKM exon 9, inhibiting exon 9 inclusion and resulting in exon 10 inclusion and production of the PKM M2 isoform. The sequence is that of Polypyrimidine tract-binding protein 1 (Ptbp1) from Rattus norvegicus (Rat).